Consider the following 282-residue polypeptide: Shikimate dehydrogenase (NADP(+)) (282 aa).

Residues 18 to 20 (SRS) and T65 each bind shikimate. The active-site Proton acceptor is K69. Shikimate contacts are provided by N90 and D106. Residues 134-138 (GAGGA), 158-163 (NRTAAR), and I223 contribute to the NADP(+) site. Y225 is a shikimate binding site. G246 provides a ligand contact to NADP(+).

This sequence belongs to the shikimate dehydrogenase family. In terms of assembly, homodimer.

It catalyses the reaction shikimate + NADP(+) = 3-dehydroshikimate + NADPH + H(+). Its pathway is metabolic intermediate biosynthesis; chorismate biosynthesis; chorismate from D-erythrose 4-phosphate and phosphoenolpyruvate: step 4/7. Involved in the biosynthesis of the chorismate, which leads to the biosynthesis of aromatic amino acids. Catalyzes the reversible NADPH linked reduction of 3-dehydroshikimate (DHSA) to yield shikimate (SA). The sequence is that of Shikimate dehydrogenase (NADP(+)) from Methylobacterium radiotolerans (strain ATCC 27329 / DSM 1819 / JCM 2831 / NBRC 15690 / NCIMB 10815 / 0-1).